The primary structure comprises 145 residues: Photosystem I reaction center subunit VI-1, chloroplastic (145 aa).

The transit peptide at 1-50 (MASLATVAAVKPSAAIKGLGGSSLAGAKLSIKPSRLSFKPKSIRANGVVA) directs the protein to the chloroplast. A helical transmembrane segment spans residues 102–118 (LLLKFLILGGGSLLTYV).

Belongs to the psaH family.

It localises to the plastid. The protein localises to the chloroplast thylakoid membrane. Functionally, possible role could be the docking of the LHC I antenna complex to the core complex. This chain is Photosystem I reaction center subunit VI-1, chloroplastic (PSAH1), found in Arabidopsis thaliana (Mouse-ear cress).